The following is a 276-amino-acid chain: Release factor glutamine methyltransferase (276 aa).

S-adenosyl-L-methionine is bound by residues glycine 117–glycine 121, aspartate 140, tryptophan 168, and asparagine 182. Asparagine 182–tyrosine 185 is a substrate binding site.

It belongs to the protein N5-glutamine methyltransferase family. PrmC subfamily.

It carries out the reaction L-glutaminyl-[peptide chain release factor] + S-adenosyl-L-methionine = N(5)-methyl-L-glutaminyl-[peptide chain release factor] + S-adenosyl-L-homocysteine + H(+). Methylates the class 1 translation termination release factors RF1/PrfA and RF2/PrfB on the glutamine residue of the universally conserved GGQ motif. The chain is Release factor glutamine methyltransferase from Yersinia pestis.